The primary structure comprises 780 residues: Pentatricopeptide repeat-containing protein At1g79540 (780 aa).

PPR repeat units lie at residues 91-125, 126-160, 161-196, 197-231, 232-266, 267-301, 302-336, 337-371, 372-406, 407-441, 442-476, 481-515, 516-550, 551-585, 653-687, 688-722, and 723-758; these read SRES…GVSV, DSYC…DCRP, DVFT…NCSP, NLYT…GISP, NRVT…GNYP, DSVA…GFVL, GLRG…NIKP, DIIL…GISP, DTYC…ESFP, DACT…GCSP, SVAT…RPAS, LSHS…GSSP, DIVS…GLSP, DSVT…RHSP, TLGP…KILV, TPPS…NFKL, and MPRV…GYNV.

This sequence belongs to the PPR family. P subfamily.

The protein is Pentatricopeptide repeat-containing protein At1g79540 of Arabidopsis thaliana (Mouse-ear cress).